The following is a 521-amino-acid chain: Bifunctional purine biosynthesis protein PurH (521 aa).

The MGS-like domain maps to 1–145 (MIKQALISVS…KNHRDVTVVV (145 aa)).

This sequence belongs to the PurH family.

It carries out the reaction (6R)-10-formyltetrahydrofolate + 5-amino-1-(5-phospho-beta-D-ribosyl)imidazole-4-carboxamide = 5-formamido-1-(5-phospho-D-ribosyl)imidazole-4-carboxamide + (6S)-5,6,7,8-tetrahydrofolate. The enzyme catalyses IMP + H2O = 5-formamido-1-(5-phospho-D-ribosyl)imidazole-4-carboxamide. It participates in purine metabolism; IMP biosynthesis via de novo pathway; 5-formamido-1-(5-phospho-D-ribosyl)imidazole-4-carboxamide from 5-amino-1-(5-phospho-D-ribosyl)imidazole-4-carboxamide (10-formyl THF route): step 1/1. The protein operates within purine metabolism; IMP biosynthesis via de novo pathway; IMP from 5-formamido-1-(5-phospho-D-ribosyl)imidazole-4-carboxamide: step 1/1. The protein is Bifunctional purine biosynthesis protein PurH of Paraburkholderia phymatum (strain DSM 17167 / CIP 108236 / LMG 21445 / STM815) (Burkholderia phymatum).